A 330-amino-acid polypeptide reads, in one-letter code: Glycoprotein integral membrane protein 1 (330 aa).

An N-terminal signal peptide occupies residues 1–23 (MEGAPLGPLALRLLLFVALPASG). The Extracellular portion of the chain corresponds to 24-268 (WLTTGAPEPP…VFPVFFQFLN (245 aa)). N-linked (GlcNAc...) asparagine glycosylation is found at asparagine 46, asparagine 64, asparagine 166, and asparagine 191. A helical membrane pass occupies residues 269–289 (IMVVGITGAAVVITILKVLFP). The Cytoplasmic segment spans residues 290–330 (VSEYKGILQLDKVDVIPVTAINLYPDGPEKTAENLEDKTCI).

It localises to the membrane. This is Glycoprotein integral membrane protein 1 (GINM1) from Pongo abelii (Sumatran orangutan).